A 133-amino-acid chain; its full sequence is ATP synthase epsilon chain, chloroplastic (133 aa).

The protein belongs to the ATPase epsilon chain family. F-type ATPases have 2 components, CF(1) - the catalytic core - and CF(0) - the membrane proton channel. CF(1) has five subunits: alpha(3), beta(3), gamma(1), delta(1), epsilon(1). CF(0) has three main subunits: a, b and c.

The protein localises to the plastid. Its subcellular location is the chloroplast thylakoid membrane. Functionally, produces ATP from ADP in the presence of a proton gradient across the membrane. The polypeptide is ATP synthase epsilon chain, chloroplastic (Citrus sinensis (Sweet orange)).